The primary structure comprises 344 residues: L-threonine 3-dehydrogenase (344 aa).

Residue Cys38 participates in Zn(2+) binding. Active-site charge relay system residues include Thr40 and His43. Zn(2+) is bound by residues His63, Glu64, Cys93, Cys96, Cys99, and Cys107. NAD(+) contacts are provided by residues Ile175, Asp195, Arg200, 263-265 (LGI), and 287-288 (IY).

This sequence belongs to the zinc-containing alcohol dehydrogenase family. Homotetramer. Zn(2+) is required as a cofactor.

Its subcellular location is the cytoplasm. The catalysed reaction is L-threonine + NAD(+) = (2S)-2-amino-3-oxobutanoate + NADH + H(+). Its pathway is amino-acid degradation; L-threonine degradation via oxydo-reductase pathway; glycine from L-threonine: step 1/2. Functionally, catalyzes the NAD(+)-dependent oxidation of L-threonine to 2-amino-3-ketobutyrate. The protein is L-threonine 3-dehydrogenase of Deinococcus deserti (strain DSM 17065 / CIP 109153 / LMG 22923 / VCD115).